The primary structure comprises 192 residues: ATP-dependent Clp protease proteolytic subunit 1 (192 aa).

Catalysis depends on S92, which acts as the Nucleophile. The active site involves H117.

It belongs to the peptidase S14 family. Fourteen ClpP subunits assemble into 2 heptameric rings which stack back to back to give a disk-like structure with a central cavity, resembling the structure of eukaryotic proteasomes.

Its subcellular location is the cytoplasm. The catalysed reaction is Hydrolysis of proteins to small peptides in the presence of ATP and magnesium. alpha-casein is the usual test substrate. In the absence of ATP, only oligopeptides shorter than five residues are hydrolyzed (such as succinyl-Leu-Tyr-|-NHMec, and Leu-Tyr-Leu-|-Tyr-Trp, in which cleavage of the -Tyr-|-Leu- and -Tyr-|-Trp bonds also occurs).. Cleaves peptides in various proteins in a process that requires ATP hydrolysis. Has a chymotrypsin-like activity. Plays a major role in the degradation of misfolded proteins. The protein is ATP-dependent Clp protease proteolytic subunit 1 of Chlamydia abortus (strain DSM 27085 / S26/3) (Chlamydophila abortus).